Consider the following 189-residue polypeptide: HGPRTase-like protein (189 aa).

Belongs to the purine/pyrimidine phosphoribosyltransferase family. Archaeal HPRT subfamily.

Its function is as follows. May catalyze a purine salvage reaction, the substrate is unknown. The sequence is that of HGPRTase-like protein from Halorubrum lacusprofundi (strain ATCC 49239 / DSM 5036 / JCM 8891 / ACAM 34).